The sequence spans 215 residues: Fanconi anemia core complex-associated protein 24 (215 aa).

The interval 160-215 (LRTVQQIPGVGKVKAPLLLQKFPSIQQLSNASIGELEQVVGQAVAQQIHAFFTQPR) is ruvA domain 2-like.

In terms of assembly, belongs to the multisubunit FA complex composed of FANCA, FANCB, FANCC, FANCE, FANCF, FANCG, FANCL/PHF9, FANCM and FAAP24. Interacts with FANCM.

It localises to the nucleus. Its function is as follows. Plays a role in DNA repair through recruitment of the FA core complex to damaged DNA. Regulates FANCD2 monoubiquitination upon DNA damage. Induces chromosomal instability as well as hypersensitivity to DNA cross-linking agents, when repressed. Targets FANCM/FAAP24 complex to the DNA, preferentially to single strand DNA. The polypeptide is Fanconi anemia core complex-associated protein 24 (Homo sapiens (Human)).